Reading from the N-terminus, the 355-residue chain is UDP-N-acetylglucosamine--N-acetylmuramyl-(pentapeptide) pyrophosphoryl-undecaprenol N-acetylglucosamine transferase (355 aa).

Residues 15–17, Asn-127, Arg-163, Ser-191, Ile-244, 263–268, and Gln-288 each bind UDP-N-acetyl-alpha-D-glucosamine; these read TGG and ALTVSE.

Belongs to the glycosyltransferase 28 family. MurG subfamily.

It is found in the cell inner membrane. The catalysed reaction is di-trans,octa-cis-undecaprenyl diphospho-N-acetyl-alpha-D-muramoyl-L-alanyl-D-glutamyl-meso-2,6-diaminopimeloyl-D-alanyl-D-alanine + UDP-N-acetyl-alpha-D-glucosamine = di-trans,octa-cis-undecaprenyl diphospho-[N-acetyl-alpha-D-glucosaminyl-(1-&gt;4)]-N-acetyl-alpha-D-muramoyl-L-alanyl-D-glutamyl-meso-2,6-diaminopimeloyl-D-alanyl-D-alanine + UDP + H(+). Its pathway is cell wall biogenesis; peptidoglycan biosynthesis. Cell wall formation. Catalyzes the transfer of a GlcNAc subunit on undecaprenyl-pyrophosphoryl-MurNAc-pentapeptide (lipid intermediate I) to form undecaprenyl-pyrophosphoryl-MurNAc-(pentapeptide)GlcNAc (lipid intermediate II). The protein is UDP-N-acetylglucosamine--N-acetylmuramyl-(pentapeptide) pyrophosphoryl-undecaprenol N-acetylglucosamine transferase of Salmonella paratyphi A (strain ATCC 9150 / SARB42).